The following is a 604-amino-acid chain: Pescadillo homolog (604 aa).

Positions Pro-349–Pro-448 constitute a BRCT domain. Disordered regions lie at residues Leu-452–Lys-562 and Thr-579–Lys-604. Coiled coils occupy residues Glu-468–Ala-522 and Gly-573–Lys-604. A compositionally biased stretch (acidic residues) spans Glu-476 to Asp-510. The span at Lys-593–Lys-604 shows a compositional bias: basic and acidic residues.

This sequence belongs to the pescadillo family. As to quaternary structure, component of the NOP7 complex, composed of ERB1, NOP7 and YTM1. The complex is held together by ERB1, which interacts with NOP7 via its N-terminal domain and with YTM1 via a high-affinity interaction between the seven-bladed beta-propeller domains of the 2 proteins. The NOP7 complex associates with the 66S pre-ribosome.

The protein resides in the nucleus. It localises to the nucleolus. Its subcellular location is the nucleoplasm. Its function is as follows. Component of the NOP7 complex, which is required for maturation of the 25S and 5.8S ribosomal RNAs and formation of the 60S ribosome. The chain is Pescadillo homolog from Scheffersomyces stipitis (strain ATCC 58785 / CBS 6054 / NBRC 10063 / NRRL Y-11545) (Yeast).